The following is a 454-amino-acid chain: Bifunctional protein GlmU (454 aa).

Residues 1–225 (MNIVILAAGM…LWETLGVNSK (225 aa)) form a pyrophosphorylase region. UDP-N-acetyl-alpha-D-glucosamine is bound by residues 6–9 (LAAG), Lys-20, Gln-71, 76–77 (GT), 98–100 (YGD), Gly-135, Glu-150, Asn-165, and Asn-223. Residue Asp-100 coordinates Mg(2+). Asn-223 contributes to the Mg(2+) binding site. Residues 226–246 (VQLAEIERIHQRNIAQRLLEA) form a linker region. The N-acetyltransferase stretch occupies residues 247-454 (GVTLLDPARI…WQRPVKQPKK (208 aa)). Residues Arg-329 and Lys-347 each contribute to the UDP-N-acetyl-alpha-D-glucosamine site. The active-site Proton acceptor is the His-359. Residues Tyr-362 and Asn-373 each contribute to the UDP-N-acetyl-alpha-D-glucosamine site. Acetyl-CoA contacts are provided by residues Ala-376, 382–383 (NY), Ser-401, Ala-419, and Arg-436.

This sequence in the N-terminal section; belongs to the N-acetylglucosamine-1-phosphate uridyltransferase family. It in the C-terminal section; belongs to the transferase hexapeptide repeat family. Homotrimer. Mg(2+) is required as a cofactor.

Its subcellular location is the cytoplasm. It catalyses the reaction alpha-D-glucosamine 1-phosphate + acetyl-CoA = N-acetyl-alpha-D-glucosamine 1-phosphate + CoA + H(+). The enzyme catalyses N-acetyl-alpha-D-glucosamine 1-phosphate + UTP + H(+) = UDP-N-acetyl-alpha-D-glucosamine + diphosphate. It functions in the pathway nucleotide-sugar biosynthesis; UDP-N-acetyl-alpha-D-glucosamine biosynthesis; N-acetyl-alpha-D-glucosamine 1-phosphate from alpha-D-glucosamine 6-phosphate (route II): step 2/2. Its pathway is nucleotide-sugar biosynthesis; UDP-N-acetyl-alpha-D-glucosamine biosynthesis; UDP-N-acetyl-alpha-D-glucosamine from N-acetyl-alpha-D-glucosamine 1-phosphate: step 1/1. The protein operates within bacterial outer membrane biogenesis; LPS lipid A biosynthesis. In terms of biological role, catalyzes the last two sequential reactions in the de novo biosynthetic pathway for UDP-N-acetylglucosamine (UDP-GlcNAc). The C-terminal domain catalyzes the transfer of acetyl group from acetyl coenzyme A to glucosamine-1-phosphate (GlcN-1-P) to produce N-acetylglucosamine-1-phosphate (GlcNAc-1-P), which is converted into UDP-GlcNAc by the transfer of uridine 5-monophosphate (from uridine 5-triphosphate), a reaction catalyzed by the N-terminal domain. The chain is Bifunctional protein GlmU from Cupriavidus metallidurans (strain ATCC 43123 / DSM 2839 / NBRC 102507 / CH34) (Ralstonia metallidurans).